The chain runs to 485 residues: Aspartyl/glutamyl-tRNA(Asn/Gln) amidotransferase subunit B (485 aa).

The protein belongs to the GatB/GatE family. GatB subfamily. In terms of assembly, heterotrimer of A, B and C subunits.

The catalysed reaction is L-glutamyl-tRNA(Gln) + L-glutamine + ATP + H2O = L-glutaminyl-tRNA(Gln) + L-glutamate + ADP + phosphate + H(+). It carries out the reaction L-aspartyl-tRNA(Asn) + L-glutamine + ATP + H2O = L-asparaginyl-tRNA(Asn) + L-glutamate + ADP + phosphate + 2 H(+). Allows the formation of correctly charged Asn-tRNA(Asn) or Gln-tRNA(Gln) through the transamidation of misacylated Asp-tRNA(Asn) or Glu-tRNA(Gln) in organisms which lack either or both of asparaginyl-tRNA or glutaminyl-tRNA synthetases. The reaction takes place in the presence of glutamine and ATP through an activated phospho-Asp-tRNA(Asn) or phospho-Glu-tRNA(Gln). The protein is Aspartyl/glutamyl-tRNA(Asn/Gln) amidotransferase subunit B of Rhodospirillum rubrum (strain ATCC 11170 / ATH 1.1.1 / DSM 467 / LMG 4362 / NCIMB 8255 / S1).